The primary structure comprises 337 residues: Putative long-chain-alcohol O-fatty-acyltransferase 10 (337 aa).

A run of 8 helical transmembrane segments spans residues 7–27 (SFVKVWGSAIISVSYCYYIPS), 38–58 (SVLPVCVLFLVLPLFFVFTIF), 59–79 (SSTTAFCLSILANFKLILFAF), 82–102 (GPLLPLPTNLFRFICFTCLPI), 142–162 (ILLLGLYPLHLYIVLDVLLTI), 228–248 (MGCMTTFFVSGLIHELVYFYI), 254–274 (TLEVTWFFVLHGVCTAMEIAV), and 285–305 (MLLRLITVGFLVVTGDLLFFG).

Belongs to the wax synthase family.

It is found in the membrane. The enzyme catalyses a long chain fatty alcohol + a fatty acyl-CoA = a wax ester + CoA. Catalyzes the final step in the synthesis of long-chain linear esters (waxes). The chain is Putative long-chain-alcohol O-fatty-acyltransferase 10 from Arabidopsis thaliana (Mouse-ear cress).